Reading from the N-terminus, the 222-residue chain is Protein-L-isoaspartate O-methyltransferase (222 aa).

S69 is an active-site residue.

This sequence belongs to the methyltransferase superfamily. L-isoaspartyl/D-aspartyl protein methyltransferase family.

The protein resides in the cytoplasm. It catalyses the reaction [protein]-L-isoaspartate + S-adenosyl-L-methionine = [protein]-L-isoaspartate alpha-methyl ester + S-adenosyl-L-homocysteine. In terms of biological role, catalyzes the methyl esterification of L-isoaspartyl residues in peptides and proteins that result from spontaneous decomposition of normal L-aspartyl and L-asparaginyl residues. It plays a role in the repair and/or degradation of damaged proteins. This is Protein-L-isoaspartate O-methyltransferase from Nitrosomonas europaea (strain ATCC 19718 / CIP 103999 / KCTC 2705 / NBRC 14298).